The sequence spans 302 residues: 4-hydroxy-tetrahydrodipicolinate synthase (302 aa).

A pyruvate-binding site is contributed by T57. Y145 (proton donor/acceptor) is an active-site residue. Residue K173 is the Schiff-base intermediate with substrate of the active site. I213 serves as a coordination point for pyruvate.

It belongs to the DapA family. In terms of assembly, homotetramer; dimer of dimers.

Its subcellular location is the cytoplasm. It carries out the reaction L-aspartate 4-semialdehyde + pyruvate = (2S,4S)-4-hydroxy-2,3,4,5-tetrahydrodipicolinate + H2O + H(+). The protein operates within amino-acid biosynthesis; L-lysine biosynthesis via DAP pathway; (S)-tetrahydrodipicolinate from L-aspartate: step 3/4. Functionally, catalyzes the condensation of (S)-aspartate-beta-semialdehyde [(S)-ASA] and pyruvate to 4-hydroxy-tetrahydrodipicolinate (HTPA). The sequence is that of 4-hydroxy-tetrahydrodipicolinate synthase from Mycolicibacterium gilvum (strain PYR-GCK) (Mycobacterium gilvum (strain PYR-GCK)).